The following is a 31-amino-acid chain: Small protein MgtS (31 aa).

The Periplasmic segment spans residues 1–4; sequence MLGN. The helical transmembrane segment at 5-25 threads the bilayer; that stretch reads MNVFMAVLGIILFSGFLAAYF. Topologically, residues 26–31 are cytoplasmic; sequence SHKWDD.

As to quaternary structure, interacts with MgtA.

The protein localises to the cell inner membrane. Functionally, modulates intracellular Mg(2+) levels to maintain cellular integrity upon Mg(2+) limitation. Acts by binding and stabilizing the Mg(2+) transporter MgtA, thereby leading to increased intracellular level of Mg(2+). May inhibit FtsH proteolysis of MgtA. The polypeptide is Small protein MgtS (Escherichia coli (strain K12)).